A 142-amino-acid polypeptide reads, in one-letter code: Large ribosomal subunit protein uL13 (142 aa).

This sequence belongs to the universal ribosomal protein uL13 family. In terms of assembly, part of the 50S ribosomal subunit.

Functionally, this protein is one of the early assembly proteins of the 50S ribosomal subunit, although it is not seen to bind rRNA by itself. It is important during the early stages of 50S assembly. The polypeptide is Large ribosomal subunit protein uL13 (Acinetobacter baumannii (strain AB0057)).